The primary structure comprises 641 residues: 1-deoxy-D-xylulose-5-phosphate synthase (641 aa).

Residues histidine 71 and 112 to 114 (SHA) each bind thiamine diphosphate. Aspartate 144 contributes to the Mg(2+) binding site. Thiamine diphosphate-binding positions include 145–146 (GA), asparagine 173, tyrosine 284, and glutamate 365. Asparagine 173 provides a ligand contact to Mg(2+).

The protein belongs to the transketolase family. DXPS subfamily. As to quaternary structure, homodimer. The cofactor is Mg(2+). Requires thiamine diphosphate as cofactor.

The catalysed reaction is D-glyceraldehyde 3-phosphate + pyruvate + H(+) = 1-deoxy-D-xylulose 5-phosphate + CO2. It participates in metabolic intermediate biosynthesis; 1-deoxy-D-xylulose 5-phosphate biosynthesis; 1-deoxy-D-xylulose 5-phosphate from D-glyceraldehyde 3-phosphate and pyruvate: step 1/1. Functionally, catalyzes the acyloin condensation reaction between C atoms 2 and 3 of pyruvate and glyceraldehyde 3-phosphate to yield 1-deoxy-D-xylulose-5-phosphate (DXP). This is 1-deoxy-D-xylulose-5-phosphate synthase from Mycolicibacterium paratuberculosis (strain ATCC BAA-968 / K-10) (Mycobacterium paratuberculosis).